We begin with the raw amino-acid sequence, 310 residues long: Ribosomal RNA large subunit methyltransferase F (310 aa).

This sequence belongs to the methyltransferase superfamily. METTL16/RlmF family.

It is found in the cytoplasm. The catalysed reaction is adenosine(1618) in 23S rRNA + S-adenosyl-L-methionine = N(6)-methyladenosine(1618) in 23S rRNA + S-adenosyl-L-homocysteine + H(+). In terms of biological role, specifically methylates the adenine in position 1618 of 23S rRNA. The sequence is that of Ribosomal RNA large subunit methyltransferase F from Psychromonas ingrahamii (strain DSM 17664 / CCUG 51855 / 37).